A 258-amino-acid polypeptide reads, in one-letter code: Snake venom serine protease CL2 (258 aa).

The signal sequence occupies residues 1–18; that stretch reads MVLIRVLANLLIIQLSYA. Positions 19–24 are excised as a propeptide; sequence QKSSEL. The 225-residue stretch at 25–249 folds into the Peptidase S1 domain; the sequence is VIGGDECNIN…YTDWIKSIIA (225 aa). 6 cysteine pairs are disulfide-bonded: Cys-31–Cys-163, Cys-50–Cys-66, Cys-98–Cys-256, Cys-142–Cys-210, Cys-174–Cys-189, and Cys-200–Cys-225. Residue Asn-44 is glycosylated (N-linked (GlcNAc...) asparagine). Catalysis depends on His-65, which acts as the Charge relay system. Asn-103 carries an N-linked (GlcNAc...) asparagine glycan. The active-site Charge relay system is Asp-110. An N-linked (GlcNAc...) asparagine glycan is attached at Asn-121. Ser-204 acts as the Charge relay system in catalysis. Residue Asn-251 is glycosylated (N-linked (GlcNAc...) asparagine).

This sequence belongs to the peptidase S1 family. Snake venom subfamily. Monomer. As to expression, expressed by the venom gland.

It is found in the secreted. Functionally, snake venom serine protease that may act in the hemostasis system of the prey. The sequence is that of Snake venom serine protease CL2 from Trimeresurus stejnegeri (Chinese green tree viper).